The following is a 306-amino-acid chain: HORMA domain-containing protein 2 (306 aa).

The HORMA domain maps to 29–232; sequence HESLIMVKKL…TGFHSMKVKV (204 aa).

Interacts with HORMAD1. Phosphorylated in a SPO11-dependent manner.

Its subcellular location is the nucleus. The protein resides in the chromosome. Essential for synapsis surveillance during meiotic prophase via the recruitment of ATR activity. Plays a key role in the male mid-pachytene checkpoint and the female meiotic prophase checkpoint: required for efficient build-up of ATR activity on unsynapsed chromosome regions, a process believed to form the basis of meiotic silencing of unsynapsed chromatin (MSUC) and meiotic prophase quality control in both sexes. Required for the DNA double-strand break-independent, BRCA1-dependent activation of ATR on the sex chromosomes that is essential for normal sex body formation. The protein is HORMA domain-containing protein 2 (HORMAD2) of Bos taurus (Bovine).